Consider the following 405-residue polypeptide: Acetate kinase (405 aa).

N7 lines the Mg(2+) pocket. K14 provides a ligand contact to ATP. Position 98 (R98) interacts with substrate. Catalysis depends on D155, which acts as the Proton donor/acceptor. ATP-binding positions include H215–G219, D289–R291, and G337–N341. Position 391 (E391) interacts with Mg(2+).

It belongs to the acetokinase family. As to quaternary structure, homodimer. Mg(2+) serves as cofactor. It depends on Mn(2+) as a cofactor.

Its subcellular location is the cytoplasm. It carries out the reaction acetate + ATP = acetyl phosphate + ADP. It functions in the pathway metabolic intermediate biosynthesis; acetyl-CoA biosynthesis; acetyl-CoA from acetate: step 1/2. In terms of biological role, catalyzes the formation of acetyl phosphate from acetate and ATP. Can also catalyze the reverse reaction. The protein is Acetate kinase of Desulfotalea psychrophila (strain LSv54 / DSM 12343).